A 615-amino-acid chain; its full sequence is Putative lipase ATG15 (615 aa).

Residues 1 to 22 are Cytoplasmic-facing; that stretch reads MKQLGEEHPLISTKRPRAKKRR. The helical; Signal-anchor for type II membrane protein transmembrane segment at 23-43 threads the bilayer; it reads SIAICAAVLTLIAFGFIRFVP. Residues 44-615 are Lumenal-facing; sequence KDILAGGWYE…NSAAHHVSSI (572 aa). 3 N-linked (GlcNAc...) asparagine glycosylation sites follow: Asn253, Asn276, and Asn360. Ser378 serves as the catalytic Charge relay system. The disordered stretch occupies residues 520-559; it reads NKNDEPPLPNPLHPKPPSTVRSSNMPHEQSPNASRSLSSL. A compositionally biased stretch (pro residues) spans 525 to 536; that stretch reads PPLPNPLHPKPP. Polar residues predominate over residues 538–559; it reads TVRSSNMPHEQSPNASRSLSSL. N-linked (GlcNAc...) asparagine glycosylation is present at Asn551.

This sequence belongs to the AB hydrolase superfamily. Lipase family. In terms of assembly, binds to both phosphatidylinositol (PI) and phosphatidylinositol 3,5-bisphosphate (PIP2).

The protein resides in the endosome. Its subcellular location is the multivesicular body membrane. It is found in the prevacuolar compartment membrane. It catalyses the reaction a triacylglycerol + H2O = a diacylglycerol + a fatty acid + H(+). Lipase which is essential for lysis of subvacuolar cytoplasm to vacuole targeted bodies and intravacuolar autophagic bodies. Involved in the lysis of intravacuolar multivesicular body (MVB) vesicles. The intravacuolar membrane disintegration by ATG15 is critical to life span extension. This Debaryomyces hansenii (strain ATCC 36239 / CBS 767 / BCRC 21394 / JCM 1990 / NBRC 0083 / IGC 2968) (Yeast) protein is Putative lipase ATG15 (ATG15).